The following is a 177-amino-acid chain: UPF0340 protein STH78 (177 aa).

Belongs to the UPF0340 family.

In Symbiobacterium thermophilum (strain DSM 24528 / JCM 14929 / IAM 14863 / T), this protein is UPF0340 protein STH78.